Here is a 190-residue protein sequence, read N- to C-terminus: Small ribosomal subunit protein uS5 (190 aa).

The 64-residue stretch at 22 to 85 folds into the S5 DRBM domain; the sequence is FVDKLVHINR…ESAKRNLTRV (64 aa).

Belongs to the universal ribosomal protein uS5 family. As to quaternary structure, part of the 30S ribosomal subunit. Contacts proteins S4 and S8.

Its function is as follows. With S4 and S12 plays an important role in translational accuracy. Located at the back of the 30S subunit body where it stabilizes the conformation of the head with respect to the body. In Rhodopseudomonas palustris (strain BisB18), this protein is Small ribosomal subunit protein uS5.